Consider the following 375-residue polypeptide: 4-hydroxy-3-methylbut-2-en-1-yl diphosphate synthase (flavodoxin) (375 aa).

The [4Fe-4S] cluster site is built by Cys-270, Cys-273, Cys-305, and Glu-312.

The protein belongs to the IspG family. [4Fe-4S] cluster is required as a cofactor.

The catalysed reaction is (2E)-4-hydroxy-3-methylbut-2-enyl diphosphate + oxidized [flavodoxin] + H2O + 2 H(+) = 2-C-methyl-D-erythritol 2,4-cyclic diphosphate + reduced [flavodoxin]. Its pathway is isoprenoid biosynthesis; isopentenyl diphosphate biosynthesis via DXP pathway; isopentenyl diphosphate from 1-deoxy-D-xylulose 5-phosphate: step 5/6. Converts 2C-methyl-D-erythritol 2,4-cyclodiphosphate (ME-2,4cPP) into 1-hydroxy-2-methyl-2-(E)-butenyl 4-diphosphate. The polypeptide is 4-hydroxy-3-methylbut-2-en-1-yl diphosphate synthase (flavodoxin) (Yersinia pestis (strain Pestoides F)).